A 155-amino-acid chain; its full sequence is Protein LOL2 (155 aa).

Methionine 1 is modified (N-acetylmethionine). The segment at 1–35 is disordered; sequence MEEIQQQTQKEEQKHREEEEEEEEGPPPGWESAVL. Putative zinc finger regions lie at residues 60-90 and 98-128; these read QMVC…VNLV and QVNC…VTDI. Residues 130–155 are disordered; it reads ENNKRPPWSEQQGPLKSLSSLRRAEN. A compositionally biased stretch (polar residues) spans 138–149; the sequence is SEQQGPLKSLSS.

The protein resides in the nucleus. Putative zinc finger that may be involved in programmed cell death and defense response. This is Protein LOL2 (LOL2) from Arabidopsis thaliana (Mouse-ear cress).